The primary structure comprises 38 residues: Large ribosomal subunit protein bL36B (38 aa).

This sequence belongs to the bacterial ribosomal protein bL36 family.

In Prochlorococcus marinus (strain MIT 9515), this protein is Large ribosomal subunit protein bL36B.